The primary structure comprises 427 residues: Peptidase B (427 aa).

Residues K195 and D200 each contribute to the Mn(2+) site. K207 is an active-site residue. Mn(2+)-binding residues include D218, D277, and E279. Residue R281 is part of the active site.

It belongs to the peptidase M17 family. As to quaternary structure, homohexamer. The cofactor is Mn(2+).

The protein resides in the cytoplasm. The enzyme catalyses Release of an N-terminal amino acid, Xaa, from a peptide or arylamide. Xaa is preferably Glu or Asp but may be other amino acids, including Leu, Met, His, Cys and Gln.. Functionally, probably plays an important role in intracellular peptide degradation. This Salmonella choleraesuis (strain SC-B67) protein is Peptidase B.